The primary structure comprises 344 residues: AP2/ERF and B3 domain-containing transcription factor RAV1 (344 aa).

Residues 1-15 (MESSSVDESTTSTGS) show a composition bias toward low complexity. The segment at 1–22 (MESSSVDESTTSTGSICETPAI) is disordered. The segment at residues 61–116 (KYKGVVPQPNGRWGAQIYEKHQRVWLGTFNEEDEAARAYDVAVHRFRRRDAVTNFK) is a DNA-binding region (AP2/ERF). Residues 148–169 (ELEQSKRRRNGNGNMTRTLLTS) form a disordered region. The TF-B3 DNA-binding region spans 188 to 292 (FEKAVTPSDV…QLYIGWKSRS (105 aa)).

It belongs to the AP2/ERF transcription factor family. RAV subfamily. As to quaternary structure, monomer. In terms of tissue distribution, expressed in all tissues examined: Roots, rosette leaves, cauline leaves, inflorescence stems, flowers and siliques. Highest expression in roots and rosette leaves. Very low expression in flowers.

The protein resides in the nucleus. Its function is as follows. Binds specifically to bipartite recognition sequences composed of two unrelated motifs, 5'-CAACA-3' and 5'-CACCTG-3'. May function as negative regulator of plant growth and development. The protein is AP2/ERF and B3 domain-containing transcription factor RAV1 (RAV1) of Arabidopsis thaliana (Mouse-ear cress).